The following is a 178-amino-acid chain: Ribosome maturation factor RimP (178 aa).

It belongs to the RimP family.

Its subcellular location is the cytoplasm. Required for maturation of 30S ribosomal subunits. This chain is Ribosome maturation factor RimP, found in Mycolicibacterium gilvum (strain PYR-GCK) (Mycobacterium gilvum (strain PYR-GCK)).